The primary structure comprises 414 residues: Secernin-1 (414 aa).

An N-acetylalanine modification is found at A2. The active site involves C9.

The protein belongs to the peptidase C69 family. Secernin subfamily.

It localises to the cytoplasm. Functionally, regulates exocytosis in mast cells. Increases both the extent of secretion and the sensitivity of mast cells to stimulation with calcium. The chain is Secernin-1 (SCRN1) from Homo sapiens (Human).